The sequence spans 332 residues: 6-phosphogluconolactonase (332 aa).

This sequence belongs to the cycloisomerase 2 family.

It carries out the reaction 6-phospho-D-glucono-1,5-lactone + H2O = 6-phospho-D-gluconate + H(+). The protein operates within carbohydrate degradation; pentose phosphate pathway; D-ribulose 5-phosphate from D-glucose 6-phosphate (oxidative stage): step 2/3. Its function is as follows. Catalyzes the hydrolysis of 6-phosphogluconolactone to 6-phosphogluconate. This chain is 6-phosphogluconolactonase, found in Pectobacterium carotovorum subsp. carotovorum (strain PC1).